The primary structure comprises 157 residues: Small ribosomal subunit protein uS7 (157 aa).

The protein belongs to the universal ribosomal protein uS7 family. As to quaternary structure, part of the 30S ribosomal subunit. Contacts proteins S9 and S11.

Its function is as follows. One of the primary rRNA binding proteins, it binds directly to 16S rRNA where it nucleates assembly of the head domain of the 30S subunit. Is located at the subunit interface close to the decoding center, probably blocks exit of the E-site tRNA. The chain is Small ribosomal subunit protein uS7 from Desulfotalea psychrophila (strain LSv54 / DSM 12343).